A 323-amino-acid chain; its full sequence is Acetyl-coenzyme A carboxylase carboxyl transferase subunit alpha (323 aa).

Residues 39 to 293 (RLSKKSQQLT…RRALADSLRQ (255 aa)) form the CoA carboxyltransferase C-terminal domain.

Belongs to the AccA family. In terms of assembly, acetyl-CoA carboxylase is a heterohexamer composed of biotin carboxyl carrier protein (AccB), biotin carboxylase (AccC) and two subunits each of ACCase subunit alpha (AccA) and ACCase subunit beta (AccD).

Its subcellular location is the cytoplasm. The catalysed reaction is N(6)-carboxybiotinyl-L-lysyl-[protein] + acetyl-CoA = N(6)-biotinyl-L-lysyl-[protein] + malonyl-CoA. It functions in the pathway lipid metabolism; malonyl-CoA biosynthesis; malonyl-CoA from acetyl-CoA: step 1/1. In terms of biological role, component of the acetyl coenzyme A carboxylase (ACC) complex. First, biotin carboxylase catalyzes the carboxylation of biotin on its carrier protein (BCCP) and then the CO(2) group is transferred by the carboxyltransferase to acetyl-CoA to form malonyl-CoA. The chain is Acetyl-coenzyme A carboxylase carboxyl transferase subunit alpha from Burkholderia lata (strain ATCC 17760 / DSM 23089 / LMG 22485 / NCIMB 9086 / R18194 / 383).